The sequence spans 254 residues: Flavin-dependent thymidylate synthase (254 aa).

The ThyX domain occupies Leu7 to Tyr237. Residues Ser71, Arg95–Arg97, and Gln103 contribute to the FAD site. Residues Glu92 to Arg95, Gln103 to Arg107, and Arg176 each bind dUMP. Residues Arg95–Ser105 carry the ThyX motif motif. FAD contacts are provided by residues Asn192–Arg194 and His198. Residue Arg203 participates in dUMP binding. Arg203 functions as the Involved in ionization of N3 of dUMP, leading to its activation in the catalytic mechanism.

The protein belongs to the thymidylate synthase ThyX family. Homotetramer. Requires FAD as cofactor.

The catalysed reaction is dUMP + (6R)-5,10-methylene-5,6,7,8-tetrahydrofolate + NADPH + H(+) = dTMP + (6S)-5,6,7,8-tetrahydrofolate + NADP(+). It functions in the pathway pyrimidine metabolism; dTTP biosynthesis. In terms of biological role, catalyzes the reductive methylation of 2'-deoxyuridine-5'-monophosphate (dUMP) to 2'-deoxythymidine-5'-monophosphate (dTMP) while utilizing 5,10-methylenetetrahydrofolate (mTHF) as the methyl donor, and NADPH and FADH(2) as the reductant. The sequence is that of Flavin-dependent thymidylate synthase from Mycobacterium sp. (strain JLS).